The chain runs to 419 residues: MNIIEIIELKKNKKKLSQDQINFCISGLVNKSIPDYQISALLMAIWFNGLDDNELYFLTKAMIDSGKIYKFHPEYKKILIDKHSTGGIGDKVSIALRPILVSFDLGVAKLSGRGLGFTGGTIDKLESINVNTDIDLKNSKKILNIANMFIVGQTNDIVPADKLLYALRDVTGTVDSLPLIAASILSKKFALESDYIFIDIKYGQGAFCHDIETAKKISNIMKNLAKKFKRKVYFVLSDMNEVLGNTVGNAIEVKEAIDFLKNNSDVGTYFKKLMFDLVTLILLKTKKCKTKKEAKEKINYVLENKIAFNNFCNWIELQNGNIAKIKNDTFFKPKYWTNIAAWKSGKISYKSIIELAEIGVDLGSGRRKKEDKIDFQAGIYLHAKSNEKIKIKDKILTLYSSKPIKQDLIDKAKKIIKIS.

It belongs to the thymidine/pyrimidine-nucleoside phosphorylase family. In terms of assembly, homodimer.

The enzyme catalyses thymidine + phosphate = 2-deoxy-alpha-D-ribose 1-phosphate + thymine. The enzymes which catalyze the reversible phosphorolysis of pyrimidine nucleosides are involved in the degradation of these compounds and in their utilization as carbon and energy sources, or in the rescue of pyrimidine bases for nucleotide synthesis. This chain is Thymidine phosphorylase (deoA), found in Mycoplasmoides pirum (Mycoplasma pirum).